We begin with the raw amino-acid sequence, 440 residues long: Trigger factor (440 aa).

Residues 176–261 form the PPIase FKBP-type domain; that stretch reads GDKVVIDYQN…VKSIYVVKDV (86 aa).

The protein belongs to the FKBP-type PPIase family. Tig subfamily.

It localises to the cytoplasm. It catalyses the reaction [protein]-peptidylproline (omega=180) = [protein]-peptidylproline (omega=0). In terms of biological role, involved in protein export. Acts as a chaperone by maintaining the newly synthesized protein in an open conformation. Functions as a peptidyl-prolyl cis-trans isomerase. This Ehrlichia canis (strain Jake) protein is Trigger factor.